The following is a 253-amino-acid chain: Decarboxylase DEC1 (253 aa).

Lys-121 functions as the Schiff-base intermediate with acetoacetate in the catalytic mechanism.

Belongs to the ADC family.

Its pathway is mycotoxin biosynthesis. In terms of biological role, decarboxylase; part of the Tox1B locus, one of the 2 loci that mediate the biosynthesis of T-toxin, a family of linear polyketides 37 to 45 carbons in length, of which the major component is 41 carbons, and which leads to high virulence to maize. One of the PKSs (PKS1 or PKS2) could synthesize a precursor, used subsequently by the other PKS as starter unit, to add additional carbons. Variability in the length of the final carbon backbone C35-47 could be achieved by varying the number of condensation cycles, or use of different starter or extender units or might be due to decarboxylation of the penultimate product, catalyzed by DEC1. Additional proteins are required for the biosynthesis of T-toxin, including oxidoreductases RED1, RED2, RED3, LAM1 and OXI1, as well as esterase TOX9. This chain is Decarboxylase DEC1, found in Cochliobolus heterostrophus (strain C4 / ATCC 48331 / race T) (Southern corn leaf blight fungus).